Consider the following 320-residue polypeptide: SUN domain-containing protein 3 (320 aa).

The Nuclear portion of the chain corresponds to 1–6 (MLTRSW). The chain crosses the membrane as a helical span at residues 7 to 29 (KIILSTVFISTFLLVGLLNHQWL). Residues 30–320 (KETEFPQKPR…RVHGIPSDYT (291 aa)) lie on the Perinuclear space side of the membrane. Residues 63 to 102 (KEQQELLKKESQTLENNFREILFLIEQIDVLKALLKDMKD) adopt a coiled-coil conformation. Residues 156–317 (GASVIEAGTS…YRFRVHGIPS (162 aa)) enclose the SUN domain.

Self-associates. Interacts with SYNE1 and SPAG4/SUN4. Proposed to form a spermatogenesis-specific LINC complex with SYNE1 during sperm head formation possibly implicating a SUN domain-based heterotrimer with SPAG4/SUN4 associating with SYNE1. Can interact with SYNE3; the interaction is questioned by missing colocalization in spermatids. In terms of tissue distribution, specifically expressed in testis (at protein level).

Its subcellular location is the membrane. The protein resides in the nucleus envelope. It is found in the nucleus inner membrane. In terms of biological role, as a probable component of the LINC (LInker of Nucleoskeleton and Cytoskeleton) complex, involved in the connection between the nuclear lamina and the cytoskeleton. The nucleocytoplasmic interactions established by the LINC complex play an important role in the transmission of mechanical forces across the nuclear envelope and in nuclear movement and positioning. May be involved in nuclear remodeling during sperm head formation in spermatogenesis. A probable SUN3:SYNE1 LINC complex may tether spermatid nuclei to posterior cytoskeletal structures such as the manchette. The polypeptide is SUN domain-containing protein 3 (Sun3) (Mus musculus (Mouse)).